Consider the following 344-residue polypeptide: S-methyl-5'-thioadenosine phosphorylase (344 aa).

Phosphate is bound by residues Thr51, 99 to 100 (RH), and 132 to 133 (SA). Met234 lines the substrate pocket. A phosphate-binding site is contributed by Ser235. 258-260 (DYD) serves as a coordination point for substrate.

It belongs to the PNP/MTAP phosphorylase family. MTAP subfamily. Homotrimer.

It is found in the cytoplasm. Its subcellular location is the nucleus. It catalyses the reaction S-methyl-5'-thioadenosine + phosphate = 5-(methylsulfanyl)-alpha-D-ribose 1-phosphate + adenine. It participates in amino-acid biosynthesis; L-methionine biosynthesis via salvage pathway; S-methyl-5-thio-alpha-D-ribose 1-phosphate from S-methyl-5'-thioadenosine (phosphorylase route): step 1/1. In terms of biological role, catalyzes the reversible phosphorylation of S-methyl-5'-thioadenosine (MTA) to adenine and 5-methylthioribose-1-phosphate. Involved in the breakdown of MTA, a major by-product of polyamine biosynthesis. Responsible for the first step in the methionine salvage pathway after MTA has been generated from S-adenosylmethionine. Has broad substrate specificity with 6-aminopurine nucleosides as preferred substrates. This Phaeosphaeria nodorum (strain SN15 / ATCC MYA-4574 / FGSC 10173) (Glume blotch fungus) protein is S-methyl-5'-thioadenosine phosphorylase.